Reading from the N-terminus, the 172-residue chain is Sec-independent protein translocase protein TatB (172 aa).

Residues 1–21 (MIDLGISKLALIGAVALVVIG) traverse the membrane as a helical segment. Residues 97–129 (GDPASRQTATQAAEWRPAPAKSRNGRNSWRNKQ) are disordered.

Belongs to the TatB family. As to quaternary structure, the Tat system comprises two distinct complexes: a TatABC complex, containing multiple copies of TatA, TatB and TatC subunits, and a separate TatA complex, containing only TatA subunits. Substrates initially bind to the TatABC complex, which probably triggers association of the separate TatA complex to form the active translocon.

It localises to the cell inner membrane. In terms of biological role, part of the twin-arginine translocation (Tat) system that transports large folded proteins containing a characteristic twin-arginine motif in their signal peptide across membranes. Together with TatC, TatB is part of a receptor directly interacting with Tat signal peptides. TatB may form an oligomeric binding site that transiently accommodates folded Tat precursor proteins before their translocation. This chain is Sec-independent protein translocase protein TatB, found in Ralstonia nicotianae (strain ATCC BAA-1114 / GMI1000) (Ralstonia solanacearum).